Consider the following 505-residue polypeptide: N-succinylglutamate 5-semialdehyde dehydrogenase (505 aa).

234-239 contributes to the NAD(+) binding site; sequence GSAHTG. Active-site residues include Glu-257 and Cys-291.

This sequence belongs to the aldehyde dehydrogenase family. AstD subfamily.

The enzyme catalyses N-succinyl-L-glutamate 5-semialdehyde + NAD(+) + H2O = N-succinyl-L-glutamate + NADH + 2 H(+). The protein operates within amino-acid degradation; L-arginine degradation via AST pathway; L-glutamate and succinate from L-arginine: step 4/5. In terms of biological role, catalyzes the NAD-dependent reduction of succinylglutamate semialdehyde into succinylglutamate. This is N-succinylglutamate 5-semialdehyde dehydrogenase from Yersinia pestis bv. Antiqua (strain Antiqua).